The sequence spans 126 residues: uncharacterized protein (126 aa).

One can recognise an HIT domain in the interval 19–126 (IFERIIEGAV…LGGGLLGSIA (108 aa)). The Histidine triad motif motif lies at 111–115 (HLHIH).

This is an uncharacterized protein from Chlamydia muridarum (strain MoPn / Nigg).